A 1108-amino-acid polypeptide reads, in one-letter code: MFLGLGRFSRLVLWFAAFRKLLGHHGLASAKFLWCLCLLSVMSLPQQVWTLPYKIGVVGPWACDSLFSKALPEVAARLAIERINRDPSFDLSYSFEYVILNEDCQTSRALSSFISHHQMASGFIGPTNPGYCEAASLLGNSWDKGIFSWACVNYELDNKISYPTFSRTLPSPIRVLVTVMKYFQWAHAGVISSDEDIWVHTANRVASALRSHGLPVGVVLTTGQDSQSMRKALQRIHQADRIRIIIMCMHSALIGGETQMHLLECAHDLKMTDGTYVFVPYDALLYSLPYKHTPYRVLRNNPKLREAYDAVLTITVESQEKTFYQAFTEAAARGEIPEKLEFDQVSPLFGTIYNSIYFIAQAMNNAMKENGQAGAASLVQHSRNMQFHGFNQLMRTDSNGNGISEYVILDTNLKEWELHSTYTVDMEMELLRFGGTPIHFPGGRPPRADAKCWFAEGKICHGGIDPAFAMMVCLTLLIALLSINGFAYFIRRRINKIQLIKGPNRILLTLEDVTFINPHFGSKRGSRASVSFQITSEVQSGRSPRLSFSSGSLTPATYENSNIAIYEGDWVWLKKFSLGDFGDLKSIKSRASDVFEMMKDLRHENINPLLGFFYDSGMFAIVTEFCSRGSLEDILTNQDVKLDWMFKSSLLLDLIKGMKYLHHREFVHGRLKSRNCVVDGRFVLKVTDYGFNDILEMLRLSEEESSMEELLWTAPELLRAPRGSRLGSFAGDVYSFAIIMQEVMVRGTPFCMMDLPAQEIINRLKKPPPVYRPVVPPEHAPPECLQLMKQCWAEAAEQRPTFDEIFNQFKTFNKGKKTNIIDSMLRMLEQYSSNLEDLIRERTEELEIEKQKTEKLLTQMLPPSVAESLKKGCTVEPEGFDLVTLYFSDIVGFTTISAMSEPIEVVDLLNDLYTLFDAIIGSHDVYKVETIGDAYMVASGLPKRNGSRHAAEIANMSLDILSSVGTFKMRHMPEVPVRIRIGLHSGPVVAGVVGLTMPRYCLFGDTVNTASRMESTGLPYRIHVSLSTVTILQNLSEGYEVELRGRTELKGKGTEETFWLIGKKGFMKPLPVPPPVDKDGQVGHGLQPVEIAAFQRRKAERQLVRNKP.

Residues 1–50 form the signal peptide; the sequence is MFLGLGRFSRLVLWFAAFRKLLGHHGLASAKFLWCLCLLSVMSLPQQVWT. Residues 51–467 lie on the Extracellular side of the membrane; it reads LPYKIGVVGP…KICHGGIDPA (417 aa). C104 and C132 are oxidised to a cystine. A helical membrane pass occupies residues 468 to 490; that stretch reads FAMMVCLTLLIALLSINGFAYFI. The Cytoplasmic segment spans residues 491-1108; it reads RRRINKIQLI…AERQLVRNKP (618 aa). In terms of domain architecture, Protein kinase spans 532 to 812; sequence FQITSEVQSG…DEIFNQFKTF (281 aa). Residues 884 to 1014 form the Guanylate cyclase domain; it reads TLYFSDIVGF…DTVNTASRME (131 aa).

This sequence belongs to the adenylyl cyclase class-4/guanylyl cyclase family. As to quaternary structure, homodimer. Interacts with RD3; promotes the exit of GUCY2F from the endoplasmic reticulum and its trafficking to the photoreceptor outer segments. Post-translationally, there are 9 conserved cysteine residues in sensory guanylate cyclases, 6 in the extracellular domain, which may be involved in intra- or interchain disulfide bonds. In terms of tissue distribution, retina. Localized exclusively in the outer nuclear layer and inner segments of the rod and cone photoreceptor cells.

It localises to the photoreceptor outer segment membrane. It carries out the reaction GTP = 3',5'-cyclic GMP + diphosphate. Its activity is regulated as follows. Activated by GUCA1B when free calcium ions concentration is low, and inhibited by GUCA1B when free calcium ions concentration is high. Inhibited by RD3. Its function is as follows. Responsible for the synthesis of cyclic GMP (cGMP) in rods and cones of photoreceptors. Plays an essential role in phototransduction, by mediating cGMP replenishment. May also participate in the trafficking of membrane-asociated proteins to the photoreceptor outer segment membrane. The protein is Retinal guanylyl cyclase 2 (GUCY2F) of Homo sapiens (Human).